We begin with the raw amino-acid sequence, 288 residues long: MSGNLDILALKDDDVTKMLAATTHVGSTSVNFQMESYVYKRRPDGVHIINLGRTWEKLLLAARCIASIEYPGEVFAISSRPYGQRAVLKFAHYTEATPTAGRFTPGAFTNQIQPAFREPRLLIVTDPLTDHQPVTEASYVNIPVIAFCNTDSPLKFVDIAIPCNNKSPHSIGLMWWLLAREVLRLRGKITHDKWDIKPDLFFYRDPEEAEKEQAALEAAPAAKDLYPEEPIVVDETNWAGEDAALPAVAAAPAAVAAAPAALPQLVQADDWNEDETQTAGSWGGGGGF.

Belongs to the universal ribosomal protein uS2 family. In terms of assembly, component of the small ribosomal subunit. Mature ribosomes consist of a small (40S) and a large (60S) subunit. The 40S subunit contains about 33 different proteins and 1 molecule of RNA (18S). The 60S subunit contains about 49 different proteins and 3 molecules of RNA (28S, 5.8S and 5S). Interacts with ribosomal protein S21.

Its subcellular location is the cytoplasm. In terms of biological role, required for the assembly and/or stability of the 40S ribosomal subunit. Required for the processing of the 20S rRNA-precursor to mature 18S rRNA in a late step of the maturation of 40S ribosomal subunits. This is Small ribosomal subunit protein uS2 from Aedes aegypti (Yellowfever mosquito).